A 629-amino-acid chain; its full sequence is Methyl-accepting chemotaxis protein PctB (629 aa).

Over 1–10 the chain is Cytoplasmic; the sequence is MIKSLKFSHK. A helical transmembrane segment spans residues 11 to 31; sequence ILLAAALVVIATFSLFTLYND. Topologically, residues 32-276 are periplasmic; it reads SLQRASIRED…AYAMLTKLRT (245 aa). The Cache domain maps to 37-260; the sequence is SIREDLEDYL…LSGLDWYIGI (224 aa). Residues Y109, S115, Y121, 126 to 128, E146, and D173 contribute to the L-arginine site; that span reads RPW. L-glutamine is bound by residues S115, Y121, 126 to 128, 144 to 146, and D173; these read RPW and YME. Residues 277 to 297 traverse the membrane as a helical segment; it reads SAIVAALIAVVAIVLLLGMLI. Residues 298–352 enclose the HAMP domain; it reads RVLMQPLTDMGRAMQDIAQGEGDLTKRLKVTSNDEFGALAISFNRFVERIHESIR. Residues 298–629 lie on the Cytoplasmic side of the membrane; the sequence is RVLMQPLTDM…LRQLVDSFKI (332 aa). Positions 357 to 593 constitute a Methyl-accepting transducer domain; the sequence is TARQLHDVAQ…SLNMDITEIN (237 aa). The segment at 405–424 is disordered; that stretch reads RNAADASHHASDANHQAEDG. Over residues 410–424 the composition is skewed to basic and acidic residues; sequence ASHHASDANHQAEDG.

Belongs to the methyl-accepting chemotaxis (MCP) protein family. In terms of assembly, monomer in the absence and presence of ligands.

The protein resides in the cell inner membrane. Functionally, chemotactic-signal transducers respond to changes in the concentration of attractants and repellents in the environment, transduce a signal from the outside to the inside of the cell, and facilitate sensory adaptation through the variation of the level of methylation. Responds to L-Arg, L-Gln, L-Ala, L-Glu, L-Lys, L-Met and L-Tyr. Also involved in repellent responses to trichloroethylene (TCE), chloroform and methylthiocyanate. In Pseudomonas aeruginosa (strain ATCC 15692 / DSM 22644 / CIP 104116 / JCM 14847 / LMG 12228 / 1C / PRS 101 / PAO1), this protein is Methyl-accepting chemotaxis protein PctB (pctB).